The primary structure comprises 160 residues: Ribosomal RNA large subunit methyltransferase H (160 aa).

S-adenosyl-L-methionine is bound by residues Gly108 and 127–132; that span reads FGLMTW.

The protein belongs to the RNA methyltransferase RlmH family. In terms of assembly, homodimer.

The protein localises to the cytoplasm. The enzyme catalyses pseudouridine(1915) in 23S rRNA + S-adenosyl-L-methionine = N(3)-methylpseudouridine(1915) in 23S rRNA + S-adenosyl-L-homocysteine + H(+). In terms of biological role, specifically methylates the pseudouridine at position 1915 (m3Psi1915) in 23S rRNA. The sequence is that of Ribosomal RNA large subunit methyltransferase H from Bartonella bacilliformis (strain ATCC 35685 / KC583 / Herrer 020/F12,63).